A 371-amino-acid chain; its full sequence is Carbamoyl phosphate synthase small chain (371 aa).

The interval 1 to 186 is CPSase; the sequence is MDYYNNDTPG…IHQGKTGDVV (186 aa). The L-glutamine site is built by Ser-52, Gly-233, and Gly-235. The Glutamine amidotransferase type-1 domain maps to 185-371; that stretch reads VVVVVDCGIK…KFKKMVVGDA (187 aa). The active-site Nucleophile is the Cys-261. L-glutamine contacts are provided by Leu-262, Gln-265, Asn-303, Gly-305, and Tyr-306. Catalysis depends on residues His-346 and Glu-348.

It belongs to the CarA family. In terms of assembly, composed of two chains; the small (or glutamine) chain promotes the hydrolysis of glutamine to ammonia, which is used by the large (or ammonia) chain to synthesize carbamoyl phosphate. Tetramer of heterodimers (alpha,beta)4.

It catalyses the reaction hydrogencarbonate + L-glutamine + 2 ATP + H2O = carbamoyl phosphate + L-glutamate + 2 ADP + phosphate + 2 H(+). The catalysed reaction is L-glutamine + H2O = L-glutamate + NH4(+). It functions in the pathway amino-acid biosynthesis; L-arginine biosynthesis; carbamoyl phosphate from bicarbonate: step 1/1. Its pathway is pyrimidine metabolism; UMP biosynthesis via de novo pathway; (S)-dihydroorotate from bicarbonate: step 1/3. Its function is as follows. Small subunit of the glutamine-dependent carbamoyl phosphate synthetase (CPSase). CPSase catalyzes the formation of carbamoyl phosphate from the ammonia moiety of glutamine, carbonate, and phosphate donated by ATP, constituting the first step of 2 biosynthetic pathways, one leading to arginine and/or urea and the other to pyrimidine nucleotides. The small subunit (glutamine amidotransferase) binds and cleaves glutamine to supply the large subunit with the substrate ammonia. This Sulfolobus acidocaldarius (strain ATCC 33909 / DSM 639 / JCM 8929 / NBRC 15157 / NCIMB 11770) protein is Carbamoyl phosphate synthase small chain.